A 193-amino-acid chain; its full sequence is MSGNAECHFSIWAILAFLGLALTISLIFNIFHCVEKQRQEKICTYSDDYFPREDEYDLEDSPIYGNVDNVALEPVDENCYEQMKARPDRSVNKLQDAPPSQETAVRVCYASLDHNNEGKRRKPRKQKSHLSDKDEEGQMHAKDISLSKTTLVDSYPPESEAIEENIHDDPIRLFGLIRAQKESLHSLDYDLAQ.

Over 1 to 10 (MSGNAECHFS) the chain is Extracellular. The chain crosses the membrane as a helical; Signal-anchor for type III membrane protein span at residues 11-31 (IWAILAFLGLALTISLIFNIF). Topologically, residues 32 to 193 (HCVEKQRQEK…LHSLDYDLAQ (162 aa)) are cytoplasmic. Phosphoserine is present on serine 46. Tyrosine 80 carries the phosphotyrosine modification. Residues 80-83 (YEQM) form an interaction with PIK3R1 region. Residues 116–166 (NEGKRRKPRKQKSHLSDKDEEGQMHAKDISLSKTTLVDSYPPESEAIEENI) form a disordered region. Positions 119-128 (KRRKPRKQKS) are enriched in basic residues. Over residues 129–145 (HLSDKDEEGQMHAKDIS) the composition is skewed to basic and acidic residues.

As to quaternary structure, homodimer; disulfide-linked. Interacts with CD3Z. When phosphorylated, interacts with PIK3R1. In terms of processing, phosphorylated on tyrosines upon TCR activation.

The protein resides in the cell membrane. In terms of biological role, stabilizes the TCR (T-cell antigen receptor)/CD3 complex at the surface of T-cells. This Bos taurus (Bovine) protein is T-cell receptor-associated transmembrane adapter 1 (TRAT1).